Here is a 263-residue protein sequence, read N- to C-terminus: N-acyl homoserine lactonase AttM (263 aa).

7 residues coordinate Zn(2+): His-103, His-105, Asp-107, His-108, His-180, Asp-202, and His-247.

The protein belongs to the metallo-beta-lactamase superfamily. Zn(2+) is required as a cofactor.

The catalysed reaction is an N-acyl-L-homoserine lactone + H2O = an N-acyl-L-homoserine + H(+). The polypeptide is N-acyl homoserine lactonase AttM (Agrobacterium fabrum (strain C58 / ATCC 33970) (Agrobacterium tumefaciens (strain C58))).